A 236-amino-acid chain; its full sequence is MEKREELYRGKAKSVYKTDDADRLILLFRNDTSAFDGKRIEQLDRKGTVNNKFNAFIMQKLEEAGIPTQFDKLLGDNECLVKKLDMIPVECVVRNYAAGSLVKRLGIEEGTKLNPYTFELFLKDDAKGDPFINESHVVAFGWGTAEQLVRMKELSIKVNEVLTKLFDDAGLLLVDFKLEFGVFHGEIVLGDEFSPDGCRLWDKDTRKKMDKDRFRQGLGDVIEAYEEVANRLGVPL.

It belongs to the SAICAR synthetase family.

The catalysed reaction is 5-amino-1-(5-phospho-D-ribosyl)imidazole-4-carboxylate + L-aspartate + ATP = (2S)-2-[5-amino-1-(5-phospho-beta-D-ribosyl)imidazole-4-carboxamido]succinate + ADP + phosphate + 2 H(+). Its pathway is purine metabolism; IMP biosynthesis via de novo pathway; 5-amino-1-(5-phospho-D-ribosyl)imidazole-4-carboxamide from 5-amino-1-(5-phospho-D-ribosyl)imidazole-4-carboxylate: step 1/2. This is Phosphoribosylaminoimidazole-succinocarboxamide synthase from Pseudomonas syringae pv. tomato (strain ATCC BAA-871 / DC3000).